A 314-amino-acid polypeptide reads, in one-letter code: THAP domain-containing protein 11 (314 aa).

The segment at 1-80 (MPGFTCCVPG…TYTVRVPTIF (80 aa)) adopts a THAP-type zinc-finger fold. The segment at 85–111 (VNERKVARRPAGAAAARRRQQQQQQQQ) is disordered. Positions 93–111 (RPAGAAAARRRQQQQQQQQ) are enriched in low complexity. The short motif at 243-246 (DHSY) is the HCFC1-binding motif (HBM) element. Residues 255-305 (EELLRKLNEQRDILALMEVKMKEMKGSIRHLRLTEAKLREELREKDRLLAM) are a coiled coil.

Belongs to the THAP11 family. In terms of assembly, forms homodimers. Interacts via HBM with HCFC1. Forms a complex with HCFC1 and ZNF143. Expressed in skin fibroblasts.

Its subcellular location is the nucleus. It is found in the cytoplasm. In terms of biological role, transcription factor, which has both transcriptional activation and repression activities. Also modulates chromatin accessibility. In complex with HCFC1 and ZNF143, regulates the expression of several genes, including AP2S1, ESCO2, OPHN1, RBL1, UBXN8 and ZNF32. May regulate the expression of genes that encode both cytoplasmic and mitochondrial ribosomal proteins. Required for normal mitochondrial development and function. Regulates mitochondrial gene expression, including that of components of the electron transport chain. Involved in the maintainance of pluripotency in early embryonic cells, possibly through its action on mitochondrial maturation which is required to meet high energy demands of these cells. Required for early development of retina, preventing premature exit of retinal progenitor cells from the cell cycle. This effect may also be mediated by its action on mitochondria. Through the regulation of MMACHC gene expression, controls cobalamin metabolism. Required for normal brain development and neural precursor differentiation. Involved in cell growth. The chain is THAP domain-containing protein 11 (THAP11) from Homo sapiens (Human).